We begin with the raw amino-acid sequence, 264 residues long: Methionine aminopeptidase (264 aa).

His79 contacts substrate. Residues Asp97, Asp108, and His171 each contribute to the a divalent metal cation site. Residue His178 participates in substrate binding. Residues Glu204 and Glu235 each contribute to the a divalent metal cation site.

It belongs to the peptidase M24A family. Methionine aminopeptidase type 1 subfamily. As to quaternary structure, monomer. It depends on Co(2+) as a cofactor. Zn(2+) is required as a cofactor. Mn(2+) serves as cofactor. Requires Fe(2+) as cofactor.

It carries out the reaction Release of N-terminal amino acids, preferentially methionine, from peptides and arylamides.. In terms of biological role, removes the N-terminal methionine from nascent proteins. The N-terminal methionine is often cleaved when the second residue in the primary sequence is small and uncharged (Met-Ala-, Cys, Gly, Pro, Ser, Thr, or Val). Requires deformylation of the N(alpha)-formylated initiator methionine before it can be hydrolyzed. This Buchnera aphidicola subsp. Acyrthosiphon pisum (strain APS) (Acyrthosiphon pisum symbiotic bacterium) protein is Methionine aminopeptidase.